The following is a 676-amino-acid chain: ATP-dependent zinc metalloprotease FtsH (676 aa).

At M1 to H12 the chain is on the cytoplasmic side. Residues M13 to T33 traverse the membrane as a helical segment. The Extracellular portion of the chain corresponds to K34–H115. Residues V116–F136 form a helical membrane-spanning segment. The Cytoplasmic portion of the chain corresponds to A137–T676. G212–T219 contributes to the ATP binding site. H433 contacts Zn(2+). E434 is a catalytic residue. 2 residues coordinate Zn(2+): H437 and D509. Residues E610 to T676 form a disordered region. Positions N615–T636 are enriched in polar residues. Residues N650–E667 are compositionally biased toward low complexity.

In the central section; belongs to the AAA ATPase family. This sequence in the C-terminal section; belongs to the peptidase M41 family. As to quaternary structure, homohexamer. Requires Zn(2+) as cofactor.

The protein resides in the cell membrane. Its function is as follows. Acts as a processive, ATP-dependent zinc metallopeptidase for both cytoplasmic and membrane proteins. Plays a role in the quality control of integral membrane proteins. The protein is ATP-dependent zinc metalloprotease FtsH of Aster yellows witches'-broom phytoplasma (strain AYWB).